Consider the following 447-residue polypeptide: Chromosomal replication initiator protein DnaA (447 aa).

Residues 1–70 (MQDFWSKAMD…EEILSEQLGE (70 aa)) form a domain I, interacts with DnaA modulators region. The interval 70 to 110 (EPVTLLFAADPALEKPVASKTQTVTPVQSGGETGDQENFHS) is domain II. The tract at residues 87–109 (ASKTQTVTPVQSGGETGDQENFH) is disordered. Positions 88-99 (SKTQTVTPVQSG) are enriched in polar residues. The interval 111-327 (GLDPRYTFDS…GALIRVSAYA (217 aa)) is domain III, AAA+ region. Residues glycine 155, glycine 157, lysine 158, and threonine 159 each coordinate ATP. The domain IV, binds dsDNA stretch occupies residues 328–447 (SLTGKPITMA…LASLKSMLQK (120 aa)).

It belongs to the DnaA family. As to quaternary structure, oligomerizes as a right-handed, spiral filament on DNA at oriC.

It is found in the cytoplasm. Plays an essential role in the initiation and regulation of chromosomal replication. ATP-DnaA binds to the origin of replication (oriC) to initiate formation of the DNA replication initiation complex once per cell cycle. Binds the DnaA box (a 9 base pair repeat at the origin) and separates the double-stranded (ds)DNA. Forms a right-handed helical filament on oriC DNA; dsDNA binds to the exterior of the filament while single-stranded (ss)DNA is stabiized in the filament's interior. The ATP-DnaA-oriC complex binds and stabilizes one strand of the AT-rich DNA unwinding element (DUE), permitting loading of DNA polymerase. After initiation quickly degrades to an ADP-DnaA complex that is not apt for DNA replication. Binds acidic phospholipids. The polypeptide is Chromosomal replication initiator protein DnaA (Magnetococcus marinus (strain ATCC BAA-1437 / JCM 17883 / MC-1)).